Consider the following 552-residue polypeptide: NADH-ubiquinone oxidoreductase chain 5 (552 aa).

Transmembrane regions (helical) follow at residues 11 to 31, 36 to 56, 68 to 88, 89 to 109, 121 to 141, 152 to 172, 196 to 216, 229 to 249, 256 to 274, 287 to 307, 322 to 342, 365 to 386, 406 to 426, 453 to 473, and 532 to 552; these read PVTI…PFGL, LAMT…AYAI, FYII…SDNY, LMMF…ISFW, SAIL…GLMI, IALV…LLLL, TPVS…YVLV, LLII…IAIV, VIAL…AIGI, HAFF…SFVA, LPFS…IPGL, ILYY…RVLY, SLGM…IGYS, AYIK…LVYV, and SRAV…LFFI.

This sequence belongs to the complex I subunit 5 family.

The protein localises to the mitochondrion inner membrane. It carries out the reaction a ubiquinone + NADH + 5 H(+)(in) = a ubiquinol + NAD(+) + 4 H(+)(out). Functionally, core subunit of the mitochondrial membrane respiratory chain NADH dehydrogenase (Complex I) that is believed to belong to the minimal assembly required for catalysis. Complex I functions in the transfer of electrons from NADH to the respiratory chain. The immediate electron acceptor for the enzyme is believed to be ubiquinone. The protein is NADH-ubiquinone oxidoreductase chain 5 (NAD5) of Candida albicans (strain SC5314 / ATCC MYA-2876) (Yeast).